The chain runs to 548 residues: Cleavage and polyadenylation specificity factor subunit 6 (548 aa).

Positions 81–161 constitute an RRM domain; it reads IALYIGNLTW…QKPIVTPCNK (81 aa). The span at 169-180 shows a compositional bias: polar residues; that stretch reads MQSRKTATQAGQ. Disordered regions lie at residues 169–401 and 473–548; these read MQSR…MDVV and LHGI…YRHR. Composition is skewed to pro residues over residues 221–279, 294–362, and 373–384; these read PAGP…PPVM, PPGP…PPPG, and GPPPSDPYGRPP. 2 stretches are compositionally biased toward basic and acidic residues: residues 385–400 and 490–500; these read PYER…DMDV and RSRERDHSRSR. Residues 501-511 show a composition bias toward basic residues; the sequence is EKSRRHKSRSR. Over residues 512–548 the composition is skewed to basic and acidic residues; the sequence is DRHDDYYRERSRERERHRDRERDRDRERDREREYRHR.

Belongs to the RRM CPSF6/7 family. Component of the cleavage factor Im (CFIm) complex.

It localises to the nucleus. Its subcellular location is the nucleoplasm. The protein resides in the nucleus speckle. It is found in the cytoplasm. Its function is as follows. Component of the cleavage factor Im (CFIm) complex that functions as an activator of the pre-mRNA 3'-end cleavage and polyadenylation processing required for the maturation of pre-mRNA into functional mRNAs. CFIm contributes to the recruitment of multiprotein complexes on specific sequences on the pre-mRNA 3'-end, so called cleavage and polyadenylation signals (pA signals). Most pre-mRNAs contain multiple pA signals, resulting in alternative cleavage and polyadenylation (APA) producing mRNAs with variable 3'-end formation. The CFIm complex acts as a key regulator of cleavage and polyadenylation site choice during APA through its binding to 5'-UGUA-3' elements localized in the 3'-untranslated region (UTR) for a huge number of pre-mRNAs. Plays a role in mRNA export. This is Cleavage and polyadenylation specificity factor subunit 6 from Xenopus laevis (African clawed frog).